Reading from the N-terminus, the 510-residue chain is Maturase K (510 aa).

It belongs to the intron maturase 2 family. MatK subfamily.

The protein resides in the plastid. Its subcellular location is the chloroplast. Functionally, usually encoded in the trnK tRNA gene intron. Probably assists in splicing its own and other chloroplast group II introns. This is Maturase K from Gratiola officinalis (Hedgehyssop).